The sequence spans 398 residues: Na(+)/H(+) antiporter NhaA (398 aa).

12 helical membrane-spanning segments follow: residues 21-41, 56-76, 94-114, 124-144, 153-173, 176-196, 201-221, 263-283, 284-304, 306-326, 333-353, and 367-387; these read AGGI…NSPL, LSVS…LVGL, VLPG…YVFI, GWAI…SLLG, VFLT…IAIF, SGLS…LVVL, VMTL…VLKS, IVPF…SLAG, LSLG…LVVG, LVGV…DLPA, MIGI…IGLL, and VGIL…LLMA.

Belongs to the NhaA Na(+)/H(+) (TC 2.A.33) antiporter family.

It localises to the cell inner membrane. It carries out the reaction Na(+)(in) + 2 H(+)(out) = Na(+)(out) + 2 H(+)(in). In terms of biological role, na(+)/H(+) antiporter that extrudes sodium in exchange for external protons. In Mesorhizobium japonicum (strain LMG 29417 / CECT 9101 / MAFF 303099) (Mesorhizobium loti (strain MAFF 303099)), this protein is Na(+)/H(+) antiporter NhaA.